The primary structure comprises 1462 residues: Copper-transporting ATPase 2 (1462 aa).

The disordered stretch occupies residues 1 to 23 (MDPRKNLASVGTMPEQERQVTAK). Over 1–655 (MDPRKNLASV…KTEIKQWKKS (655 aa)) the chain is Cytoplasmic. HMA domains lie at 68-134 (ATDV…FEAS), 153-219 (AVVK…FEAA), 267-333 (ATLP…PGHF), and 361-427 (RTAV…FEVS). Positions 79, 82, 164, 167, 278, and 281 each coordinate Cu(+). A disordered region spans residues 333–361 (FKVSLPDGVEENEPQSGSSQRHQEQGPGR). Cys372 serves as a coordination point for Cu(+). The disordered stretch occupies residues 460 to 487 (KMAPDTRGLPTHQGPGHSSETPSSPGAT). The span at 475-487 (GHSSETPSSPGAT) shows a compositional bias: polar residues. Phosphoserine is present on residues Ser478 and Ser483. HMA domains are found at residues 490 to 556 (QKCF…FEAS) and 566 to 632 (GDIE…FHAS). Residues Cys501, Cys504, Cys577, and Cys580 each coordinate Cu(+). A helical membrane pass occupies residues 656–677 (FLCSLVFGIPVMGLMVYMLIPS). Residues 678-699 (STPQETMVLDHNIIPGLSVLNL) are Extracellular-facing. Residues 700–719 (IFFILCTFVQFLGGWYFYVQ) form a helical membrane-spanning segment. Over 720 to 726 (AYKSLRH) the chain is Cytoplasmic. A helical membrane pass occupies residues 727 to 747 (RSANMDVLIVLATTIAYAYSL). Topologically, residues 748–766 (VILVVAVAEKAEKSPVTFF) are extracellular. A helical transmembrane segment spans residues 767–787 (DTPPMLFVFIALGRWLEHVAK). The Cytoplasmic segment spans residues 788–921 (SKTSEALAKL…KAPIQQLADR (134 aa)). A helical transmembrane segment spans residues 922–944 (FSGYFVPFIIIISTLTLVVWIVI). The Extracellular segment spans residues 945–974 (GFVDFGVVQKYFPSPSKHISQTEVIIRFAF). Residues 975–996 (QTSITVLCIACPCSLGLATPTA) traverse the membrane as a helical segment. Residues 997–1319 (VMVGTGVAAQ…LSKRTVRRIR (323 aa)) lie on the Cytoplasmic side of the membrane. The active-site 4-aspartylphosphate intermediate is the Asp1029. The Mg(2+) site is built by Asp1264 and Asp1268. Residues 1320–1337 (VNLVLALIYNMVGIPIAA) traverse the membrane as a helical segment. Residues 1338-1348 (GVFMPIGIVLQ) lie on the Extracellular side of the membrane. A helical transmembrane segment spans residues 1349-1368 (PWMGSAAMAASSVSVVLSSL). Topologically, residues 1369–1462 (QLKCYRKPDL…LSDRDEEQCI (94 aa)) are cytoplasmic. Phosphoserine is present on residues Ser1395 and Ser1454.

Belongs to the cation transport ATPase (P-type) (TC 3.A.3) family. Type IB subfamily. Monomer. Interacts with COMMD1/MURR1. Interacts with DCTN4, in a copper-dependent manner. Interacts with ATOX1. Interacts (via C-terminus) with ZBTB16/PLZF. In terms of tissue distribution, detected in liver and kidney.

The protein resides in the golgi apparatus. Its subcellular location is the trans-Golgi network membrane. It is found in the late endosome. It carries out the reaction Cu(+)(in) + ATP + H2O = Cu(+)(out) + ADP + phosphate + H(+). Copper ion transmembrane transporter involved in the export of copper out of the cells, such as the efflux of hepatic copper into the bile. The polypeptide is Copper-transporting ATPase 2 (Atp7b) (Mus musculus (Mouse)).